Reading from the N-terminus, the 360-residue chain is 45 kDa calcium-binding protein (360 aa).

The first 29 residues, methionine 1–alanine 29, serve as a signal peptide directing secretion. Residue asparagine 33 is glycosylated (N-linked (GlcNAc...) asparagine). EF-hand domains are found at residues arginine 96 to glutamate 131, glutamate 135 to phenylalanine 170, methionine 231 to asparagine 266, tryptophan 276 to tyrosine 311, and asparagine 312 to serine 347. Positions 109, 111, 113, 115, 120, 148, 150, 152, 154, 159, 244, 246, 248, 250, 255, 289, 291, 293, 300, 325, 327, 329, 331, and 336 each coordinate Ca(2+).

The protein belongs to the CREC family.

The protein resides in the golgi apparatus lumen. In terms of biological role, may regulate calcium-dependent activities in the endoplasmic reticulum lumen or post-ER compartment. In Xenopus tropicalis (Western clawed frog), this protein is 45 kDa calcium-binding protein (sdf4).